Consider the following 333-residue polypeptide: Coiled-coil domain-containing protein 68 (333 aa).

Coiled-coil stretches lie at residues 86 to 120 (LDLL…SREA) and 160 to 302 (EKEQ…HWTE).

Interacts with CEP170.

It is found in the cytoplasm. Its subcellular location is the cytoskeleton. The protein localises to the microtubule organizing center. It localises to the centrosome. The protein resides in the centriole. Its function is as follows. Centriolar protein required for centriole subdistal appendage assembly and microtubule anchoring in interphase cells. Together with CCDC120, cooperate with subdistal appendage components ODF2, NIN and CEP170 for hierarchical subdistal appendage assembly. This is Coiled-coil domain-containing protein 68 (Ccdc68) from Mus musculus (Mouse).